The following is a 238-amino-acid chain: Accessory gene regulator A (238 aa).

The region spanning 2–125 (KIFICEDDPK…LRTRIIDCLE (124 aa)) is the Response regulatory domain. Aspartate 59 bears the 4-aspartylphosphate mark. Residues 143–238 (IELKRGSNSV…YASVRNVKKK (96 aa)) enclose the HTH LytTR-type domain.

The protein resides in the cytoplasm. Required for high-level post-exponential phase expression of a series of secreted proteins. The chain is Accessory gene regulator A (agrA) from Staphylococcus aureus (strain Mu50 / ATCC 700699).